The primary structure comprises 214 residues: Coiled-coil domain-containing protein 169 (214 aa).

Residues 30-144 (EMLQMSTFEL…IEQEAKAYYK (115 aa)) adopt a coiled-coil conformation. The segment at 161–214 (VTQEAAKKQQSDPAHATREKPAFKAKYNGLAKRRTMTKRRGGMTKGSHPSNMKH) is disordered. Basic and acidic residues predominate over residues 165–182 (AAKKQQSDPAHATREKPA). Over residues 191–202 (AKRRTMTKRRGG) the composition is skewed to basic residues.

This sequence belongs to the CCDC169 family.

The polypeptide is Coiled-coil domain-containing protein 169 (ccdc169) (Xenopus laevis (African clawed frog)).